The sequence spans 618 residues: UvrABC system protein C (618 aa).

A GIY-YIG domain is found at R15 to I93. In terms of domain architecture, UVR spans N203–T238.

This sequence belongs to the UvrC family. Interacts with UvrB in an incision complex.

It is found in the cytoplasm. Functionally, the UvrABC repair system catalyzes the recognition and processing of DNA lesions. UvrC both incises the 5' and 3' sides of the lesion. The N-terminal half is responsible for the 3' incision and the C-terminal half is responsible for the 5' incision. This Syntrophus aciditrophicus (strain SB) protein is UvrABC system protein C.